A 1222-amino-acid polypeptide reads, in one-letter code: Chitin synthase 4 (1222 aa).

2 disordered regions span residues 1–101 (MSLP…ERNR) and 138–200 (TERT…KRIE). Composition is skewed to polar residues over residues 11 to 24 (QAYN…NSPS) and 42 to 77 (NQAS…SPDG). Residues 182–196 (SGKIKRKSRRHSKPP) are compositionally biased toward basic residues. Helical transmembrane passes span 205–225 (PPTF…GFIM) and 243–263 (MGLI…TFGF). Residues asparagine 378, asparagine 418, and asparagine 440 are each glycosylated (N-linked (GlcNAc...) asparagine). The chain crosses the membrane as a helical span at residues 513 to 533 (ALILSVVGVRFFLAIIFQWFI). Residues 576-630 (TVYGSSDRSSKRASFLPTTSRFSSVGGPDIRSQGGRRMPTTMASQSTSNQLLTPN) are disordered. Residues 616–630 (TMASQSTSNQLLTPN) show a composition bias toward polar residues. Asparagine 637 and asparagine 1030 each carry an N-linked (GlcNAc...) asparagine glycan. The next 3 membrane-spanning stretches (helical) occupy residues 1055 to 1075 (FIIF…AFTF), 1089 to 1109 (IIPL…VIIT), and 1113 to 1133 (WSYI…NFVL). A disordered region spans residues 1202–1222 (GGQTWTSPPGHQYNEEYYSDA).

It belongs to the chitin synthase family. Class IV subfamily.

It localises to the cell membrane. It catalyses the reaction [(1-&gt;4)-N-acetyl-beta-D-glucosaminyl](n) + UDP-N-acetyl-alpha-D-glucosamine = [(1-&gt;4)-N-acetyl-beta-D-glucosaminyl](n+1) + UDP + H(+). Functionally, polymerizes chitin, a structural polymer of the cell wall and septum, by transferring the sugar moiety of UDP-GlcNAc to the non-reducing end of the growing chitin polymer. Shows additive effects in septum formation with CHS1, CHS2, CHS3A, CHS5, CHS6 and CHS7. Regulates conidiation. Involved in virulence and mediates mycotoxin deoxinivalenol (DON) biosynthesis via the regulation of the expression of TRI4, TRI5 and TRI6. This Gibberella zeae (strain ATCC MYA-4620 / CBS 123657 / FGSC 9075 / NRRL 31084 / PH-1) (Wheat head blight fungus) protein is Chitin synthase 4.